Consider the following 251-residue polypeptide: Flap endonuclease Xni (251 aa).

Residue Asp-104 participates in Mg(2+) binding. The 5'-3' exonuclease domain occupies 160 to 250; it reads VLPRQLPDYW…SGNLQQLRLK (91 aa). K(+)-binding residues include Leu-171, Ala-172, Pro-180, Val-182, and Val-185. The tract at residues 184–189 is interaction with DNA; it reads GVGAKT.

Belongs to the Xni family. The cofactor is Mg(2+). K(+) serves as cofactor.

Its function is as follows. Has flap endonuclease activity. During DNA replication, flap endonucleases cleave the 5'-overhanging flap structure that is generated by displacement synthesis when DNA polymerase encounters the 5'-end of a downstream Okazaki fragment. The sequence is that of Flap endonuclease Xni from Yersinia pseudotuberculosis serotype I (strain IP32953).